Consider the following 89-residue polypeptide: Putative protein T-ENOL (89 aa).

2 disordered regions span residues 1-31 and 54-89; these read MAST…KASL and RSHM…TDTR.

Specifically expressed in testis (at protein level).

This chain is Putative protein T-ENOL, found in Rattus norvegicus (Rat).